The chain runs to 517 residues: Facilitated trehalose transporter Tret1 (517 aa).

Residues 1-56 (MWIEIPECYEVLRNVFSKFRRHSLTAAMVKLLMRADTHVSFTVPAEEPVAKCTFSQ) lie on the Cytoplasmic side of the membrane. The helical transmembrane segment at 57–77 (VLAALSVSLGSMVVGFSSAYT) threads the bilayer. The Extracellular portion of the chain corresponds to 78–100 (SPALVSMKDRNITSFEVTDQSGS). The N-linked (GlcNAc...) asparagine glycan is linked to Asn88. A helical membrane pass occupies residues 101–121 (WVGGIMPLAGLVGGILGGPLI). Topologically, residues 122–135 (EYLGRKNTILATAT) are cytoplasmic. Residues 136–156 (PFIISWLLIACATHVAMVLVG) traverse the membrane as a helical segment. The Extracellular portion of the chain corresponds to 157–158 (RA). A helical transmembrane segment spans residues 159–179 (LSGFSVGVASLSLPVYLGETV). The Cytoplasmic portion of the chain corresponds to 180–184 (QPEVR). Residues 185–205 (GTLGLLPTAFGNIGILLCFVA) form a helical membrane-spanning segment. The Extracellular portion of the chain corresponds to 206–212 (GNYMDWS). The chain crosses the membrane as a helical span at residues 213–233 (ELAFLGATLPVPFLILMFLIP). Residues 234–296 (ETPRWYVSRG…DLLKKTNLKP (63 aa)) are Cytoplasmic-facing. A helical membrane pass occupies residues 297-317 (LLISLGLMFFQQLSGINAVIF). Residues 318-333 (YTVQIFQDAGSTIDEN) are Extracellular-facing. The helical transmembrane segment at 334-354 (LCTIIVGVVNFIATFIATLLI) threads the bilayer. Topologically, residues 355–360 (DRLGRK) are cytoplasmic. The helical transmembrane segment at 361–381 (MLLYISDIAMIITLMTLGGFF) threads the bilayer. Topologically, residues 382-392 (YVKNNGGDVSH) are extracellular. A helical transmembrane segment spans residues 393–413 (IGWLPLASFVIFVLGFSLGFG). Residues 414 to 437 (PIPWLMMGEILPGKIRGSAASVAT) lie on the Cytoplasmic side of the membrane. A helical membrane pass occupies residues 438–458 (AFNWSCTFVVTKTFADIIASI). Residues 459–461 (GTH) lie on the Extracellular side of the membrane. Residues 462–482 (GAFWMFGSVCVVGLVFVIMYV) form a helical membrane-spanning segment. The Cytoplasmic segment spans residues 483-517 (PETQGKSLEDIERKMCGRVRRMSSVANIKPLSFNM).

Belongs to the major facilitator superfamily. Sugar transporter (TC 2.A.1.1) family. Trehalose transporter subfamily.

It localises to the cell membrane. High-capacity facilitative transporter for trehalose. Does not transport maltose, sucrose or lactose. Mediates the bidirectional transfer of trehalose. Responsible for the transport of trehalose synthesized in the fat body and the incorporation of trehalose into other tissues that require a carbon source, thereby regulating trehalose levels in the hemolymph. This Culex quinquefasciatus (Southern house mosquito) protein is Facilitated trehalose transporter Tret1.